The primary structure comprises 64 residues: Large ribosomal subunit protein uL29 (64 aa).

It belongs to the universal ribosomal protein uL29 family.

This chain is Large ribosomal subunit protein uL29, found in Pseudomonas entomophila (strain L48).